An 840-amino-acid chain; its full sequence is Protein translocase subunit SecA (840 aa).

Residues glutamine 85, 103–107 (GEGKT), and aspartate 492 each bind ATP. The disordered stretch occupies residues 787–822 (QRERVAKETGASHGGDSQEVKKKPVKKEPKVGRNDL). The segment covering 802–819 (DSQEVKKKPVKKEPKVGR) has biased composition (basic and acidic residues). Residues cysteine 823, cysteine 825, cysteine 834, and cysteine 835 each coordinate Zn(2+).

It belongs to the SecA family. In terms of assembly, monomer and homodimer. Part of the essential Sec protein translocation apparatus which comprises SecA, SecYEG and auxiliary proteins SecDF. Other proteins may also be involved. Zn(2+) serves as cofactor.

The protein resides in the cell membrane. The protein localises to the cytoplasm. It catalyses the reaction ATP + H2O + cellular proteinSide 1 = ADP + phosphate + cellular proteinSide 2.. Functionally, part of the Sec protein translocase complex. Interacts with the SecYEG preprotein conducting channel. Has a central role in coupling the hydrolysis of ATP to the transfer of proteins into and across the cell membrane, serving as an ATP-driven molecular motor driving the stepwise translocation of polypeptide chains across the membrane. The protein is Protein translocase subunit SecA of Clostridium perfringens (strain ATCC 13124 / DSM 756 / JCM 1290 / NCIMB 6125 / NCTC 8237 / Type A).